A 257-amino-acid polypeptide reads, in one-letter code: Global transcriptional regulator CodY (257 aa).

The GAF domain stretch occupies residues 1–155 (MSLLSKTREL…AATVIGMEIL (155 aa)). Positions 203–222 (ASKVADRVGITRSVIVNALR) form a DNA-binding region, H-T-H motif.

This sequence belongs to the CodY family.

The protein resides in the cytoplasm. In terms of biological role, DNA-binding global transcriptional regulator which is involved in the adaptive response to starvation and acts by directly or indirectly controlling the expression of numerous genes in response to nutrient availability. During rapid exponential growth, CodY is highly active and represses genes whose products allow adaptation to nutrient depletion. This Staphylococcus haemolyticus (strain JCSC1435) protein is Global transcriptional regulator CodY.